We begin with the raw amino-acid sequence, 413 residues long: DNA primase DnaG (413 aa).

The Toprim domain occupies 168 to 246; sequence PNLIIVEGRA…KIDYVARAPV (79 aa). Glu-174, Asp-219, and Asp-221 together coordinate Mg(2+).

Belongs to the archaeal DnaG primase family. Forms a ternary complex with MCM helicase and DNA. Component of the archaeal exosome complex. The cofactor is Mg(2+).

It catalyses the reaction ssDNA + n NTP = ssDNA/pppN(pN)n-1 hybrid + (n-1) diphosphate.. In terms of biological role, RNA polymerase that catalyzes the synthesis of short RNA molecules used as primers for DNA polymerase during DNA replication. Also part of the exosome, which is a complex involved in RNA degradation. Acts as a poly(A)-binding protein that enhances the interaction between heteromeric, adenine-rich transcripts and the exosome. This Metallosphaera sedula (strain ATCC 51363 / DSM 5348 / JCM 9185 / NBRC 15509 / TH2) protein is DNA primase DnaG.